The following is a 536-amino-acid chain: Peptide chain release factor 3 (536 aa).

The tr-type G domain occupies 13–281; sequence SHRRTFAIIS…ALIDWAPAPQ (269 aa). Residues 22–29, 90–94, and 144–147 each bind GTP; these read SHPDAGKT, DTPGH, and NKCD.

The protein belongs to the TRAFAC class translation factor GTPase superfamily. Classic translation factor GTPase family. PrfC subfamily.

The protein resides in the cytoplasm. Increases the formation of ribosomal termination complexes and stimulates activities of RF-1 and RF-2. It binds guanine nucleotides and has strong preference for UGA stop codons. It may interact directly with the ribosome. The stimulation of RF-1 and RF-2 is significantly reduced by GTP and GDP, but not by GMP. This chain is Peptide chain release factor 3, found in Chromobacterium violaceum (strain ATCC 12472 / DSM 30191 / JCM 1249 / CCUG 213 / NBRC 12614 / NCIMB 9131 / NCTC 9757 / MK).